Reading from the N-terminus, the 172-residue chain is C-phycocyanin beta chain (172 aa).

Asn-72 is modified (N4-methylasparagine). (2R,3E)-phycocyanobilin-binding residues include Cys-82 and Cys-153.

Belongs to the phycobiliprotein family. As to quaternary structure, heterodimer of an alpha and a beta subunit, which further assembles into trimers and the trimers into hexamers. The basic functional unit of phycobiliproteins is a ring-shaped hexamer formed from two back-to-back trimers contacting via the alpha chain subunits. The trimers are composed of alpha/beta subunit heterodimers arranged around a three-fold axis of symmetry. The phycoerythrins also contain a gamma subunit which is located in the center of the hexamer. In terms of processing, contains two covalently linked bilin chromophores.

The protein resides in the plastid. It is found in the chloroplast thylakoid membrane. In terms of biological role, light-harvesting photosynthetic bile pigment-protein from the phycobiliprotein complex (phycobilisome, PBS). Phycocyanin is the major phycobiliprotein in the PBS rod. The chain is C-phycocyanin beta chain (cpcB) from Rhodella violacea (Red alga).